Consider the following 149-residue polypeptide: Ribosome-binding factor A (149 aa).

It belongs to the RbfA family. As to quaternary structure, monomer. Binds 30S ribosomal subunits, but not 50S ribosomal subunits or 70S ribosomes.

Its subcellular location is the cytoplasm. Functionally, one of several proteins that assist in the late maturation steps of the functional core of the 30S ribosomal subunit. Associates with free 30S ribosomal subunits (but not with 30S subunits that are part of 70S ribosomes or polysomes). Required for efficient processing of 16S rRNA. May interact with the 5'-terminal helix region of 16S rRNA. The protein is Ribosome-binding factor A of Caulobacter vibrioides (strain ATCC 19089 / CIP 103742 / CB 15) (Caulobacter crescentus).